Reading from the N-terminus, the 229-residue chain is Potassium/proton antiporter CemA (229 aa).

4 consecutive transmembrane segments (helical) span residues 7–27 (LIPL…SLSF), 114–134 (IICF…LVIL), 154–174 (ILLL…ELMI), and 189–209 (IISG…KYWI).

Belongs to the CemA family.

The protein localises to the plastid. The protein resides in the chloroplast inner membrane. It catalyses the reaction K(+)(in) + H(+)(out) = K(+)(out) + H(+)(in). Contributes to K(+)/H(+) antiport activity by supporting proton efflux to control proton extrusion and homeostasis in chloroplasts in a light-dependent manner to modulate photosynthesis. Prevents excessive induction of non-photochemical quenching (NPQ) under continuous-light conditions. Indirectly promotes efficient inorganic carbon uptake into chloroplasts. The protein is Potassium/proton antiporter CemA of Fagus sylvatica (Beechnut).